A 448-amino-acid chain; its full sequence is Mitochondrial distribution and morphology protein 10 (448 aa).

The protein belongs to the MDM10 family. Component of the ER-mitochondria encounter structure (ERMES) or MDM complex, composed of MMM1, MDM10, MDM12 and MDM34. Associates with the mitochondrial outer membrane sorting assembly machinery SAM(core) complex.

It is found in the mitochondrion outer membrane. In terms of biological role, component of the ERMES/MDM complex, which serves as a molecular tether to connect the endoplasmic reticulum and mitochondria. Components of this complex are involved in the control of mitochondrial shape and protein biogenesis and may function in phospholipid exchange. MDM10 is involved in the late assembly steps of the general translocase of the mitochondrial outer membrane (TOM complex). Functions in the TOM40-specific route of the assembly of outer membrane beta-barrel proteins, including the association of TOM40 with the receptor TOM22 and small TOM proteins. Can associate with the SAM(core) complex as well as the MDM12-MMM1 complex, both involved in late steps of the major beta-barrel assembly pathway, that is responsible for biogenesis of all outer membrane beta-barrel proteins. May act as a switch that shuttles between both complexes and channels precursor proteins into the TOM40-specific pathway. Plays a role in mitochondrial morphology and in the inheritance of mitochondria. In Podospora anserina (strain S / ATCC MYA-4624 / DSM 980 / FGSC 10383) (Pleurage anserina), this protein is Mitochondrial distribution and morphology protein 10.